The chain runs to 496 residues: uncharacterized protein (496 aa).

12 helical membrane-spanning segments follow: residues 33 to 53 (FLKG…LIFA), 89 to 109 (LNFL…YTLI), 127 to 147 (PWFV…FTFF), 154 to 174 (VFNL…YEIF), 193 to 213 (LIIA…TPLV), 247 to 267 (IILI…NTNF), 285 to 305 (LWFI…VFAY), 320 to 340 (LWVY…YMVF), 355 to 375 (LLNL…VTLF), 382 to 402 (SLIN…IYIF), 411 to 431 (LLVL…IVGF), and 455 to 475 (VQIM…YLTI).

The protein resides in the cell membrane. This is an uncharacterized protein from Ureaplasma parvum serovar 3 (strain ATCC 700970).